We begin with the raw amino-acid sequence, 473 residues long: Ribosomal RNA small subunit methyltransferase F (473 aa).

S-adenosyl-L-methionine is bound by residues 124-130, E148, D175, and D193; that span reads ASAPGSK. C246 serves as the catalytic Nucleophile.

Belongs to the class I-like SAM-binding methyltransferase superfamily. RsmB/NOP family.

Its subcellular location is the cytoplasm. The catalysed reaction is cytidine(1407) in 16S rRNA + S-adenosyl-L-methionine = 5-methylcytidine(1407) in 16S rRNA + S-adenosyl-L-homocysteine + H(+). Functionally, specifically methylates the cytosine at position 1407 (m5C1407) of 16S rRNA. The polypeptide is Ribosomal RNA small subunit methyltransferase F (Aliivibrio salmonicida (strain LFI1238) (Vibrio salmonicida (strain LFI1238))).